We begin with the raw amino-acid sequence, 120 residues long: Nitrogen regulatory protein GlnK1 (120 aa).

Residues Thr40, 48–50 (GEQ), Val75, and 98–101 (GDGR) contribute to the ADP site. ATP contacts are provided by residues Thr40, 48–50 (GEQ), Val75, and 98–101 (GDGR).

The protein belongs to the P(II) protein family. As to quaternary structure, homotrimer. Interacts and forms a complex with Amt1.

It localises to the cytoplasm. Involved in the regulation of nitrogen metabolism. Regulates the activity of its targets by protein-protein interaction in response to the nitrogen status of the cell. Regulates the activity of the ammonia channel Amt1 via direct interaction. The sequence is that of Nitrogen regulatory protein GlnK1 from Archaeoglobus fulgidus (strain ATCC 49558 / DSM 4304 / JCM 9628 / NBRC 100126 / VC-16).